Here is a 359-residue protein sequence, read N- to C-terminus: Membrane-bound lytic murein transglycosylase C (359 aa).

The first 16 residues, 1 to 16 (MKKYLALALIAPLLIS), serve as a signal peptide directing secretion. C17 is lipidated: N-palmitoyl cysteine. C17 is lipidated: S-diacylglycerol cysteine.

It belongs to the transglycosylase Slt family.

The protein localises to the cell outer membrane. It carries out the reaction Exolytic cleavage of the (1-&gt;4)-beta-glycosidic linkage between N-acetylmuramic acid (MurNAc) and N-acetylglucosamine (GlcNAc) residues in peptidoglycan, from either the reducing or the non-reducing ends of the peptidoglycan chains, with concomitant formation of a 1,6-anhydrobond in the MurNAc residue.. Functionally, murein-degrading enzyme. May play a role in recycling of muropeptides during cell elongation and/or cell division. The protein is Membrane-bound lytic murein transglycosylase C of Shigella dysenteriae serotype 1 (strain Sd197).